Consider the following 466-residue polypeptide: Protein hob1 (466 aa).

Residues 17–269 (LRSKFNVGEI…RGDVKDRAEA (253 aa)) form the BAR domain. Coiled-coil stretches lie at residues 31-67 (IYEDAGRRFKSLETEAKKLAEDAKKYTDAINGLLNHQ) and 177-204 (EKKLYEAETAFEQSSQEYEYYNEMLKEE). Positions 280 to 342 (PTYKRPGMGP…ASDYSTPSAG (63 aa)) are disordered. Residues 294-303 (ATASSSSSFS) are compositionally biased toward low complexity. Phosphoserine occurs at positions 298, 299, 301, and 303. The 60-residue stretch at 407–466 (PAAEHVVALYDYAAQAAGDLSFHAGDRIEVVSRTDNQNEWWIGRLNGAQGQFPGNYVQLE) folds into the SH3 domain.

In terms of biological role, has a role in DNA damage signaling as a part of stress response processes. The protein is Protein hob1 (hob1) of Schizosaccharomyces pombe (strain 972 / ATCC 24843) (Fission yeast).